We begin with the raw amino-acid sequence, 127 residues long: Transcription initiation factor IIA subunit 2 (127 aa).

It belongs to the TFIIA subunit 2 family. In terms of assembly, TFIIA is a heterodimer composed of the large TOA1 and the small TOA2 subunits.

The protein resides in the nucleus. In terms of biological role, TFIIA is a component of the transcription machinery of RNA polymerase II and plays an important role in transcriptional activation. TFIIA in a complex with tbp mediates transcriptional activity. In Cryptococcus neoformans var. neoformans serotype D (strain B-3501A) (Filobasidiella neoformans), this protein is Transcription initiation factor IIA subunit 2 (TOA2).